Here is a 168-residue protein sequence, read N- to C-terminus: G/U mismatch-specific DNA glycosylase (168 aa).

Belongs to the uracil-DNA glycosylase (UDG) superfamily. TDG/mug family. Binds DNA as a monomer.

It is found in the cytoplasm. It carries out the reaction Specifically hydrolyzes mismatched double-stranded DNA and polynucleotides, releasing free uracil.. Functionally, excises ethenocytosine and uracil, which can arise by alkylation or deamination of cytosine, respectively, from the corresponding mispairs with guanine in ds-DNA. It is capable of hydrolyzing the carbon-nitrogen bond between the sugar-phosphate backbone of the DNA and the mispaired base. The complementary strand guanine functions in substrate recognition. Required for DNA damage lesion repair in stationary-phase cells. In Salmonella choleraesuis (strain SC-B67), this protein is G/U mismatch-specific DNA glycosylase.